The chain runs to 158 residues: Transcription elongation factor GreA (158 aa).

A coiled-coil region spans residues 14 to 76; that stretch reads LDQLKDELTH…EIESILKNVK (63 aa).

Belongs to the GreA/GreB family.

Functionally, necessary for efficient RNA polymerase transcription elongation past template-encoded arresting sites. The arresting sites in DNA have the property of trapping a certain fraction of elongating RNA polymerases that pass through, resulting in locked ternary complexes. Cleavage of the nascent transcript by cleavage factors such as GreA or GreB allows the resumption of elongation from the new 3'terminus. GreA releases sequences of 2 to 3 nucleotides. The polypeptide is Transcription elongation factor GreA (Acholeplasma laidlawii (strain PG-8A)).